We begin with the raw amino-acid sequence, 422 residues long: uncharacterized protein (422 aa).

This sequence belongs to the N(4)/N(6)-methyltransferase family.

The enzyme catalyses a 2'-deoxyadenosine in DNA + S-adenosyl-L-methionine = an N(6)-methyl-2'-deoxyadenosine in DNA + S-adenosyl-L-homocysteine + H(+). This is an uncharacterized protein from Mycoplasma pneumoniae (strain ATCC 29342 / M129 / Subtype 1) (Mycoplasmoides pneumoniae).